Reading from the N-terminus, the 895-residue chain is Pyruvate dehydrogenase E1 component (895 aa).

A disordered region spans residues 1 to 20 (MSAVPEQILGASSANDADPQ).

As to quaternary structure, homodimer. Part of the PDH complex, consisting of multiple copies of pyruvate dehydrogenase (E1), dihydrolipoamide acetyltransferase (E2) and lipoamide dehydrogenase (E3). Thiamine diphosphate is required as a cofactor.

It carries out the reaction N(6)-[(R)-lipoyl]-L-lysyl-[protein] + pyruvate + H(+) = N(6)-[(R)-S(8)-acetyldihydrolipoyl]-L-lysyl-[protein] + CO2. Functionally, component of the pyruvate dehydrogenase (PDH) complex, that catalyzes the overall conversion of pyruvate to acetyl-CoA and CO(2). In Cupriavidus necator (strain ATCC 17699 / DSM 428 / KCTC 22496 / NCIMB 10442 / H16 / Stanier 337) (Ralstonia eutropha), this protein is Pyruvate dehydrogenase E1 component (pdhA).